The chain runs to 350 residues: Flap endonuclease 1 (350 aa).

The tract at residues 1 to 101 is N-domain; that stretch reads MGVNIREVIP…LEIERRKRVK (101 aa). Residues D30, D83, E155, E157, D176, D178, and D239 each coordinate Mg(2+). Positions 119 to 261 are I-domain; it reads AARRYAQMAA…TALKMVKAHR (143 aa). The segment at 340-348 is interaction with PCNA; that stretch reads QQMGLDAWL.

It belongs to the XPG/RAD2 endonuclease family. FEN1 subfamily. Interacts with PCNA. PCNA stimulates the nuclease activity without altering cleavage specificity. It depends on Mg(2+) as a cofactor.

In terms of biological role, structure-specific nuclease with 5'-flap endonuclease and 5'-3' exonuclease activities involved in DNA replication and repair. During DNA replication, cleaves the 5'-overhanging flap structure that is generated by displacement synthesis when DNA polymerase encounters the 5'-end of a downstream Okazaki fragment. Binds the unpaired 3'-DNA end and kinks the DNA to facilitate 5' cleavage specificity. Cleaves one nucleotide into the double-stranded DNA from the junction in flap DNA, leaving a nick for ligation. Also involved in the base excision repair (BER) pathway. Acts as a genome stabilization factor that prevents flaps from equilibrating into structures that lead to duplications and deletions. Also possesses 5'-3' exonuclease activity on nicked or gapped double-stranded DNA. This is Flap endonuclease 1 from Hyperthermus butylicus (strain DSM 5456 / JCM 9403 / PLM1-5).